We begin with the raw amino-acid sequence, 476 residues long: Glutamyl-tRNA(Gln) amidotransferase subunit A (476 aa).

Residues Lys-76 and Ser-151 each act as charge relay system in the active site. Ser-175 acts as the Acyl-ester intermediate in catalysis.

It belongs to the amidase family. GatA subfamily. In terms of assembly, heterotrimer of A, B and C subunits.

It carries out the reaction L-glutamyl-tRNA(Gln) + L-glutamine + ATP + H2O = L-glutaminyl-tRNA(Gln) + L-glutamate + ADP + phosphate + H(+). Functionally, allows the formation of correctly charged Gln-tRNA(Gln) through the transamidation of misacylated Glu-tRNA(Gln) in organisms which lack glutaminyl-tRNA synthetase. The reaction takes place in the presence of glutamine and ATP through an activated gamma-phospho-Glu-tRNA(Gln). The polypeptide is Glutamyl-tRNA(Gln) amidotransferase subunit A (Chlorobium phaeobacteroides (strain DSM 266 / SMG 266 / 2430)).